Here is a 342-residue protein sequence, read N- to C-terminus: Phenylalanine--tRNA ligase alpha subunit (342 aa).

Glu-260 is a Mg(2+) binding site.

This sequence belongs to the class-II aminoacyl-tRNA synthetase family. Phe-tRNA synthetase alpha subunit type 1 subfamily. In terms of assembly, tetramer of two alpha and two beta subunits. Mg(2+) is required as a cofactor.

Its subcellular location is the cytoplasm. It carries out the reaction tRNA(Phe) + L-phenylalanine + ATP = L-phenylalanyl-tRNA(Phe) + AMP + diphosphate + H(+). This chain is Phenylalanine--tRNA ligase alpha subunit, found in Mycobacterium avium (strain 104).